Here is a 267-residue protein sequence, read N- to C-terminus: Pyrroline-5-carboxylate reductase (267 aa).

Belongs to the pyrroline-5-carboxylate reductase family.

Its subcellular location is the cytoplasm. The catalysed reaction is L-proline + NADP(+) = (S)-1-pyrroline-5-carboxylate + NADPH + 2 H(+). The enzyme catalyses L-proline + NAD(+) = (S)-1-pyrroline-5-carboxylate + NADH + 2 H(+). It participates in amino-acid biosynthesis; L-proline biosynthesis; L-proline from L-glutamate 5-semialdehyde: step 1/1. Catalyzes the reduction of 1-pyrroline-5-carboxylate (PCA) to L-proline. The chain is Pyrroline-5-carboxylate reductase from Synechocystis sp. (strain ATCC 27184 / PCC 6803 / Kazusa).